Reading from the N-terminus, the 449-residue chain is MSSKPFTPEEARRIVQVLQKPAVFLNMTTDWPALHWTVEHLSACLTKRIRFRVGKRSEDMAPLFETECSYVEATIKEFLSWTANDGEPLVGPFLDYHCKEFWAYADYKYIAQLFQDKPAMFQDVVWSDFGFPGRDGRDSTLWIGTQCANTPCHLDSYGCNLVFQIQGRKRWHLFPPDDTACLYPTRVPYEESSVFSHVNVIRPDLKKFPAYGRARLYTVTLQPGQVLFVPRHWWHYVESVDPVTVSVNSWIEMDMDDEARVAEALTKTIVCAVKSSPSLDNSDQWLNPTEDGVSSHDENMQYLNLAVKVCMNKKRDDIEDQPKAEAVKRDFSGVLKSPASPPSLVSFGPHLIPVHLTEKPQCSSTKDSCCFSCTDSPQCQITTKDQDKLRSDNKLGQRSGQSVLQDTENPGGSGEMHISTNDVLECLVHPDVIALVTRLIMCRQRELHS.

The JmjC domain occupies 102 to 266 (WAYADYKYIA…DEARVAEALT (165 aa)). Basic and acidic residues predominate over residues 385-395 (DQDKLRSDNKL). Positions 385–416 (DQDKLRSDNKLGQRSGQSVLQDTENPGGSGEM) are disordered. Residues 396–410 (GQRSGQSVLQDTENP) show a composition bias toward polar residues.

It is found in the cytoplasm. In terms of biological role, may play a role in cellular stress response. In Danio rerio (Zebrafish), this protein is HSPB1-associated protein 1 homolog (hspbap1).